The sequence spans 772 residues: MTAKSAAAAARATVYGYPRQGRGRELKKAIEGYWKGRLDADALRTTATGLRRDTWQQLAEAGIHEVPTGDFSYYDHVLDTSVMVGAIPARHRAAVEADALDGYFAMARGTQDVAPLEMTKWFDTNYHYLVPELGPDTVFSTDSAKQVAELGEALALGLTARPVLVGPVTYLLLAKPAPGVAADFDPLTLLDRLLPVYAEVLADLRAAGAEWVQLDEPALVQDRTPAELNAAERAYRVLGGLTDRPKLLVASYFDRLGDALPVLAEAPVEGLALDFAEGAAANLDALAAVGGLPGKRLVAGVVDGRNIWVNDLEKSLALLGTLLGLADRVDVAASCSLLHVPLDAAAERDIAPQVLRWLAFARQKTAEIVTLAKGLGHGTDAIAAQLAANRADLVSRADSALTRDPAVRSRTAATTDADARRSGPYPERAAAQRARLGLPLLPTTTIGSFPQTAELRTARADLRAGRIDSAGYEERIRAEIGEVISFQEKAGLDVLVHGEAERNDMVQYFAERLTGYLTTQHGWVQSYGTRYVRPPVLAGDISRPEPMTVPWTTYAQSLTDRPVKGMLTGPVTMLAWSFVRDDQPLGETARQVALALRDEVGDLEAAGTSVIQVDEPALRETLPLRAADRPAYLAWATEAFRLTTGGVRPDTQIHTHMCYAEFGDIVQAIDDLDADVISLEAARSHMQVARELAEHAYPREAGPGVYDIHSPRVPGVDETAALLRKGLEAIPAERLWVNPDCGLKTRGWPETRASLENLVAAARTVRAEHAGS.

Residues 24-27 and Lys120 each bind 5-methyltetrahydropteroyltri-L-glutamate; that span reads RELK. A disordered region spans residues 404-428; the sequence is DPAVRSRTAATTDADARRSGPYPER. L-homocysteine contacts are provided by residues 446–448 and Glu499; that span reads IGS. Residues 446-448 and Glu499 each bind L-methionine; that span reads IGS. Residue Trp576 participates in 5-methyltetrahydropteroyltri-L-glutamate binding. An L-homocysteine-binding site is contributed by Asp614. Residue Asp614 coordinates L-methionine. Glu620 contacts 5-methyltetrahydropteroyltri-L-glutamate. Zn(2+) contacts are provided by His656, Cys658, and Glu680. His709 (proton donor) is an active-site residue. A Zn(2+)-binding site is contributed by Cys741.

The protein belongs to the vitamin-B12 independent methionine synthase family. It depends on Zn(2+) as a cofactor.

The catalysed reaction is 5-methyltetrahydropteroyltri-L-glutamate + L-homocysteine = tetrahydropteroyltri-L-glutamate + L-methionine. It participates in amino-acid biosynthesis; L-methionine biosynthesis via de novo pathway; L-methionine from L-homocysteine (MetE route): step 1/1. Catalyzes the transfer of a methyl group from 5-methyltetrahydrofolate to homocysteine resulting in methionine formation. This chain is 5-methyltetrahydropteroyltriglutamate--homocysteine methyltransferase, found in Streptomyces avermitilis (strain ATCC 31267 / DSM 46492 / JCM 5070 / NBRC 14893 / NCIMB 12804 / NRRL 8165 / MA-4680).